The following is a 310-amino-acid chain: Aspartate carbamoyltransferase catalytic subunit (310 aa).

The carbamoyl phosphate site is built by arginine 55 and threonine 56. L-aspartate is bound at residue lysine 83. The carbamoyl phosphate site is built by arginine 105, histidine 133, and glutamine 136. Positions 166 and 220 each coordinate L-aspartate. 2 residues coordinate carbamoyl phosphate: glycine 261 and proline 262.

The protein belongs to the aspartate/ornithine carbamoyltransferase superfamily. ATCase family. Heterododecamer (2C3:3R2) of six catalytic PyrB chains organized as two trimers (C3), and six regulatory PyrI chains organized as three dimers (R2).

It carries out the reaction carbamoyl phosphate + L-aspartate = N-carbamoyl-L-aspartate + phosphate + H(+). The protein operates within pyrimidine metabolism; UMP biosynthesis via de novo pathway; (S)-dihydroorotate from bicarbonate: step 2/3. Catalyzes the condensation of carbamoyl phosphate and aspartate to form carbamoyl aspartate and inorganic phosphate, the committed step in the de novo pyrimidine nucleotide biosynthesis pathway. This is Aspartate carbamoyltransferase catalytic subunit from Chlorobium phaeovibrioides (strain DSM 265 / 1930) (Prosthecochloris vibrioformis (strain DSM 265)).